Here is a 288-residue protein sequence, read N- to C-terminus: N-acetyltransferase ECO1 (288 aa).

Positions 1–50 (MKRDITQLLSPELSQSSSRNDKKRKPTNSNKKVQTVLNFPSSSPNASQST) are disordered. The segment covering 7–18 (QLLSPELSQSSS) has biased composition (low complexity). Polar residues predominate over residues 27–50 (TNSNKKVQTVLNFPSSSPNASQST). The CCHH-type zinc-finger motif lies at 50 to 74 (TTCPTCGMTYYSHVSKDNDVHNKYH).

The protein belongs to the acetyltransferase family. ECO subfamily.

The protein localises to the nucleus. Functionally, probable acetyltransferase required for the establishment of sister chromatid cohesion and couple the processes of cohesion and DNA replication to ensure that only sister chromatids become paired together. In contrast to the structural cohesins, the deposition and establishment factors are required only during S phase. Acts by acetylating the cohesin complex component SMC3. The protein is N-acetyltransferase ECO1 (ECO1) of Debaryomyces hansenii (strain ATCC 36239 / CBS 767 / BCRC 21394 / JCM 1990 / NBRC 0083 / IGC 2968) (Yeast).